The primary structure comprises 445 residues: Phosphoglucosamine mutase (445 aa).

The active-site Phosphoserine intermediate is Ser-102. Mg(2+) is bound by residues Ser-102, Asp-241, Asp-243, and Asp-245. At Ser-102 the chain carries Phosphoserine.

Belongs to the phosphohexose mutase family. The cofactor is Mg(2+). In terms of processing, activated by phosphorylation.

The enzyme catalyses alpha-D-glucosamine 1-phosphate = D-glucosamine 6-phosphate. Catalyzes the conversion of glucosamine-6-phosphate to glucosamine-1-phosphate. The protein is Phosphoglucosamine mutase of Zymomonas mobilis subsp. mobilis (strain ATCC 31821 / ZM4 / CP4).